A 308-amino-acid polypeptide reads, in one-letter code: D-alanine--D-alanine ligase (308 aa).

Positions 106 to 305 constitute an ATP-grasp domain; that stretch reads KMLWKAFGLP…FEQLVVKILE (200 aa). Residue 136-191 coordinates ATP; that stretch reads VEKLGLPLMVKPSLEGSSVGLTKVNAIDDLKSAVEFALQYDETVLIEEWLSGDELT. The Mg(2+) site is built by Asp-259, Glu-272, and Asn-274.

Belongs to the D-alanine--D-alanine ligase family. It depends on Mg(2+) as a cofactor. Mn(2+) is required as a cofactor.

The protein resides in the cytoplasm. It catalyses the reaction 2 D-alanine + ATP = D-alanyl-D-alanine + ADP + phosphate + H(+). It functions in the pathway cell wall biogenesis; peptidoglycan biosynthesis. Its function is as follows. Cell wall formation. This chain is D-alanine--D-alanine ligase, found in Histophilus somni (strain 2336) (Haemophilus somnus).